A 506-amino-acid polypeptide reads, in one-letter code: UDP-N-acetylglucosamine--peptide N-acetylglucosaminyltransferase GtfA subunit (506 aa).

An N-terminus R-fold-1 region spans residues 1–78 (MTVYNINLGI…FTDIKIAPTT (78 aa)). 16 to 19 (GVEY) contributes to the UDP binding site. Positions 79-195 (VTLDQVLAQV…LYRFPDRIFY (117 aa)) are extended beta-sheet domain. The interval 196–306 (SKAELVRYFL…QPQIATIPVG (111 aa)) is C-terminus R-fold-1. Histidine 242 is an N-acetyl-D-glucosamine binding site. An R-fold-2 region spans residues 307–506 (SLDQLTYPKE…LKEVRDDSAL (200 aa)). UDP is bound by residues arginine 328, tyrosine 357, and 383–385 (GHA). Residue 405–407 (GFG) participates in N-acetyl-D-glucosamine binding. Residue threonine 409 coordinates UDP.

The protein belongs to the glycosyltransferase group 1 family. Glycosyltransferase 4 subfamily. In terms of assembly, forms a heterotetramer with 2 subunits each of GtfA and GtfB. Part of the accessory SecA2/SecY2 protein translocation apparatus required to export cell wall protein GspB.

It is found in the cytoplasm. It localises to the cell membrane. The enzyme catalyses L-seryl-[protein] + UDP-N-acetyl-alpha-D-glucosamine = 3-O-[N-acetyl-alpha-D-glucosaminyl]-L-seryl-[protein] + UDP + H(+). Its pathway is protein modification; protein glycosylation. In terms of biological role, required for polymorphic O-glycosylation of GspB, a serine-rich repeat cell wall protein encoded upstream in the same operon. Catalyzes the first step in glycosylation by transferring N-acetylglucosamine from UDP-GlcNAc to serine residues in GspB. Part of the accessory SecA2/SecY2 system specifically required to export GspB. Upon coexpression in E.coli with GtfB glycosylates GspB constructs. Glycosylation probably occurs intracellularly. Requires GtfB for glycosylation activity, it has no activity alone. Does not use UDP-glucose as substrate. Has a fast, probably processive glycosylation phase followed by a slower, non-processive phase. The enzyme probably modifies its tertiary conformation by opening and closing its intersubunit interfaces to accomodate the increasingly glycosylated substrate; protein substrate recognition is provided by GtfB. This Streptococcus gordonii protein is UDP-N-acetylglucosamine--peptide N-acetylglucosaminyltransferase GtfA subunit.